The following is a 231-amino-acid chain: Heptaprenylglyceryl phosphate synthase (231 aa).

Position 12 (Lys12) interacts with sn-glycerol 1-phosphate. Residues Asp14 and Thr40 each coordinate Mg(2+). Sn-glycerol 1-phosphate is bound by residues 159–164 (YMEYSG), Gly189, and 209–210 (GN).

Belongs to the GGGP/HepGP synthase family. Group I subfamily. Homodimer. Requires Mg(2+) as cofactor.

The enzyme catalyses sn-glycerol 1-phosphate + all-trans-heptaprenyl diphosphate = 3-heptaprenyl-sn-glycero-1-phosphate + diphosphate. Its pathway is membrane lipid metabolism; glycerophospholipid metabolism. Functionally, prenyltransferase that catalyzes in vivo the transfer of the heptaprenyl moiety of heptaprenyl pyrophosphate (HepPP; 35 carbon atoms) to the C3 hydroxyl of sn-glycerol-1-phosphate (G1P), producing heptaprenylglyceryl phosphate (HepGP). This reaction is an ether-bond-formation step in the biosynthesis of archaea-type G1P-based membrane lipids found in Bacillales. The protein is Heptaprenylglyceryl phosphate synthase of Brevibacillus brevis (strain 47 / JCM 6285 / NBRC 100599).